Consider the following 695-residue polypeptide: Pentatricopeptide repeat-containing protein 1, mitochondrial (695 aa).

PPR repeat units follow at residues 133–169 (TQYW…RLQP), 170–204 (LECN…DLEP), 205–243 (SDAT…NFQL), 244–278 (NLKT…GHAV), 279–315 (TEET…GIKP), and 316–352 (SRHG…TILL). Residues 391–416 (QKLEGPPALPEARVTSRTQPEVETTA) are disordered. PPR repeat units lie at residues 470–485 (EGFL…QPDI), 517–551 (DVTF…GIVP), 552–583 (NLRT…QVSP), and 584–618 (NIHI…SVPV). Residues 672-695 (WQEFQNKPVGDQDTTDKAGGLRDG) are disordered. Residues 685-695 (TTDKAGGLRDG) show a composition bias toward basic and acidic residues.

The protein belongs to the PTCD1 family. In terms of assembly, associates with mitochondrial leucine tRNAs. Interacts with ELAC2.

The protein resides in the mitochondrion. It localises to the mitochondrion matrix. Its function is as follows. Mitochondrial protein implicated in negative regulation of leucine tRNA levels, as well as negative regulation of mitochondria-encoded proteins and COX activity. Also affects the 3'-processing of mitochondrial tRNAs. This Mus musculus (Mouse) protein is Pentatricopeptide repeat-containing protein 1, mitochondrial (Ptcd1).